The following is a 430-amino-acid chain: RNA pseudouridine synthase 2, chloroplastic (430 aa).

A chloroplast-targeting transit peptide spans 1–43; it reads MLSISQLPSFSLTTAKSLRYPSSPSSSLSIFFSFFPKVSNFVR. An S4 RNA-binding domain is found at 82–155; it reads IRLDSWISSR…IPLDIVYEDK (74 aa). The disordered stretch occupies residues 195 to 222; sequence SNSEEDDDSDEETFSDDEEMTTSPSSYA. Residues 196–214 are compositionally biased toward acidic residues; that stretch reads NSEEDDDSDEETFSDDEEM. D234 is a catalytic residue.

It belongs to the pseudouridine synthase RluA family.

It localises to the plastid. It is found in the chloroplast. It carries out the reaction a uridine in RNA = a pseudouridine in RNA. The polypeptide is RNA pseudouridine synthase 2, chloroplastic (Arabidopsis thaliana (Mouse-ear cress)).